We begin with the raw amino-acid sequence, 273 residues long: Terpene cyclase ascF (273 aa).

Helical transmembrane passes span 18 to 38, 49 to 69, 78 to 98, 113 to 133, 153 to 173, 178 to 198, and 217 to 237; these read VYEATFQFGGVAWTLCYILIA, MPLFALANNFAWEMVYALWVV, MTIWMLIDTPIIYSILKHGVL, ILVGLIALCAAAHWSWQSWWI, YWAVSMCQFLVSTMSLAMLCV, GGVSWMIWLSRFLGTLIGLNM, and APAVFVWGVTTVCDIIYGFVL.

It belongs to the paxB family.

It localises to the membrane. The catalysed reaction is ilicicolin A epoxide = ilicicolin C. It functions in the pathway secondary metabolite biosynthesis; terpenoid biosynthesis. Functionally, terpene cyclase; part of the asc-1 gene cluster that mediates the biosynthesis of both ascochlorin and ascofuranone, a strong inhibitor of cyanide-insensitive alternative oxidases and a promising drug candidate against African trypanosomiasis. The first step in the pathway is performed by the non-reducing polyketide synthase ascC that produces orsellinic acid by condensing acetyl-CoA with 3 malonyl-CoA units. Orsellinic acid is then prenylated by the prenyltransferase ascA to yield ilicicolinic acid B. Ilicicolinic acid B is further reduced to ilicicolin B by the reductase ascB. The halogenase ascD then chlorinates ilicicolin B to produce ilicicolin A which is converted to ilicicolin A epoxide by the cytochrome P450 monooxygenase ascE that catalyzes stereoselective epoxidation of the terminal double bond of the prenyl group. Ilicicolin A epoxide is the last common precursor for the biosynthesis of ascofuranone and ascochlorin. The terpene cyclase ascF produces a monocyclic terpene, and the cyclization reaction is proposed to be initiated by protonation of the terminal epoxide of ilicicolin A epoxide to generate a monocyclic tertiarycation, which is followed by a series of hydride and methyl shifts with abstraction of proton, leading to the formation of the (14S,15R,19R)-trimethylcyclohexanone ring structure of ilicicolin C, which is finally reduced to ascochlorin by the dehydrogenase ascG. On the other hand, ilicicolin A epoxide is hydroxylated by the cytochrome P450 monooxygenase ascH, and the resultant product is cyclized by the terpene cyclase ascI to ascofuranol via protonation-initiated epoxide ring opening, which facilitates the 6-endo-tet cyclization to form the tetrahy-drofuran ring. Finally, ascofuranol is oxidized into ascofuranone by ascJ. This Acremonium egyptiacum (Oospora egyptiaca) protein is Terpene cyclase ascF.